Here is a 457-residue protein sequence, read N- to C-terminus: UDP-N-acetylmuramate--L-alanine ligase (457 aa).

Position 109–115 (109–115) interacts with ATP; the sequence is GTDGKTT.

Belongs to the MurCDEF family.

The protein localises to the cytoplasm. It carries out the reaction UDP-N-acetyl-alpha-D-muramate + L-alanine + ATP = UDP-N-acetyl-alpha-D-muramoyl-L-alanine + ADP + phosphate + H(+). It participates in cell wall biogenesis; peptidoglycan biosynthesis. Cell wall formation. The sequence is that of UDP-N-acetylmuramate--L-alanine ligase from Thermotoga sp. (strain RQ2).